Consider the following 316-residue polypeptide: Pantothenate kinase (316 aa).

95–102 serves as a coordination point for ATP; the sequence is GSVAVGKS.

Belongs to the prokaryotic pantothenate kinase family.

It localises to the cytoplasm. The enzyme catalyses (R)-pantothenate + ATP = (R)-4'-phosphopantothenate + ADP + H(+). It participates in cofactor biosynthesis; coenzyme A biosynthesis; CoA from (R)-pantothenate: step 1/5. This chain is Pantothenate kinase, found in Pectobacterium carotovorum subsp. carotovorum (strain PC1).